The chain runs to 317 residues: Type II methyltransferase M.NgoBI (317 aa).

One can recognise an SAM-dependent MTase C5-type domain in the interval 2 to 302 (YKTIDLFSGI…KICSLLFPAR (301 aa)). C71 is an active-site residue.

It belongs to the class I-like SAM-binding methyltransferase superfamily. C5-methyltransferase family.

It catalyses the reaction a 2'-deoxycytidine in DNA + S-adenosyl-L-methionine = a 5-methyl-2'-deoxycytidine in DNA + S-adenosyl-L-homocysteine + H(+). In terms of biological role, a methylase, recognizes the double-stranded sequence 5'-RGCGCY-3', methylates C-5 on both strands, and protects the DNA from cleavage by the NgoBI endonuclease. This is Type II methyltransferase M.NgoBI (ngoBIM) from Neisseria gonorrhoeae.